The chain runs to 93 residues: Large ribosomal subunit protein uL23cz/uL23cy (93 aa).

The protein belongs to the universal ribosomal protein uL23 family. As to quaternary structure, part of the 50S ribosomal subunit.

It localises to the plastid. The protein localises to the chloroplast. Functionally, binds to 23S rRNA. This Nandina domestica (Heavenly bamboo) protein is Large ribosomal subunit protein uL23cz/uL23cy (rpl23-A).